A 196-amino-acid chain; its full sequence is Endoribonuclease YbeY (196 aa).

Zn(2+) contacts are provided by histidine 120, histidine 124, and histidine 130.

Belongs to the endoribonuclease YbeY family. It depends on Zn(2+) as a cofactor.

The protein resides in the cytoplasm. Its function is as follows. Single strand-specific metallo-endoribonuclease involved in late-stage 70S ribosome quality control and in maturation of the 3' terminus of the 16S rRNA. The chain is Endoribonuclease YbeY from Corynebacterium glutamicum (strain R).